The sequence spans 155 residues: Low molecular weight phosphotyrosine protein phosphatase 1 (155 aa).

The active-site Nucleophile is C9. R15 is a catalytic residue. Catalysis depends on D124, which acts as the Proton donor.

This sequence belongs to the low molecular weight phosphotyrosine protein phosphatase family. Cone cells and primary pigment cells in developing pupal retina.

The protein resides in the cytoplasm. The enzyme catalyses O-phospho-L-tyrosyl-[protein] + H2O = L-tyrosyl-[protein] + phosphate. It carries out the reaction a phosphate monoester + H2O = an alcohol + phosphate. Its function is as follows. Acts on tyrosine phosphorylated proteins, low-MW aryl phosphates and natural and synthetic acyl phosphates. The sequence is that of Low molecular weight phosphotyrosine protein phosphatase 1 (primo-1) from Drosophila melanogaster (Fruit fly).